The primary structure comprises 219 residues: uncharacterized protein (219 aa).

A helical transmembrane segment spans residues 28 to 50 (IVSSLIAGGYALFVSAFTSYVYT). Residues 155-218 (EILRESLSEI…EEIEKELEFF (64 aa)) are a coiled coil.

The protein resides in the membrane. This is an uncharacterized protein from Aquifex aeolicus (strain VF5).